Consider the following 160-residue polypeptide: Troponin C, skeletal muscle (160 aa).

EF-hand domains lie at 15 to 50 (EMIA…LGQN), 51 to 86 (PTRE…QLKE), 91 to 126 (KSEE…SGEP), and 127 to 160 (VSEE…ENIQ). 18 residues coordinate Ca(2+): Asp28, Asp30, Asp34, Glu39, Asp64, Asp66, Ser68, Thr70, Glu75, Asp104, Asn106, Asp108, Glu115, Asp140, Asn142, Asp144, Lys146, and Glu151.

Belongs to the troponin C family.

Its function is as follows. Troponin is the central regulatory protein of striated muscle contraction. Tn consists of three components: Tn-I which is the inhibitor of actomyosin ATPase, Tn-T which contains the binding EF-hand for tropomyosin and Tn-C. The binding of calcium to Tn-C abolishes the inhibitory action of Tn on actin filaments. This is Troponin C, skeletal muscle from Anguilla anguilla (European freshwater eel).